A 75-amino-acid polypeptide reads, in one-letter code: Iota-conotoxin-like R11.3 (75 aa).

A signal peptide spans 1–19 (MKLCLTFLLVLMILASVTG). A propeptide spanning residues 20-34 (EKLSEQTLRRAARKN) is cleaved from the precursor. Intrachain disulfides connect Cys-39–Cys-53, Cys-46–Cys-58, Cys-52–Cys-63, and Cys-57–Cys-70.

It belongs to the conotoxin I1 superfamily. As to expression, expressed by the venom duct.

The protein resides in the secreted. Functionally, iota-conotoxins bind to voltage-gated sodium channels (Nav) and act as agonists by shifting the voltage-dependence of activation to more hyperpolarized levels. Produces general excitatory symptoms. The polypeptide is Iota-conotoxin-like R11.3 (Conus radiatus (Rayed cone)).